The primary structure comprises 680 residues: Viral IRF2-like protein (680 aa).

Residues 7–103 (SEWLTDFIID…RPFTIYKGKM (97 aa)) constitute a DNA-binding region (IRF tryptophan pentad repeat). Disordered stretches follow at residues 156-201 (SLRK…SENE), 220-257 (EEPE…HVHT), 343-365 (ETAS…ESVS), and 403-423 (ASPQ…ESVS). A compositionally biased stretch (low complexity) spans 168-188 (KQAAAVATPTTSSAAEVSSRS). Over residues 191–200 (EDTESSDSEN) the composition is skewed to acidic residues. Over residues 220–240 (EEPEPSGFGSSGQSSSLLAPD) the composition is skewed to low complexity.

This sequence belongs to the IRF family. As to quaternary structure, interacts with host EIF2AK2/PKR. Interacts with host USP7.

Its subcellular location is the host nucleus. It is found in the host cytoplasm. DNA-binding transcription factor that plays a role in the modulation of host immune response. Acts by interacting with host EIF2AK2/PKR and inhibiting its activation. In turn, EIF2AK2/PKR substrates including EIF2S1 or histone H2A are not phosphorylated. Inhibits type I interferon signaling by targeting host IRF3 during viral reactivation from latency. Attenuates the transcriptional activity of host FOXO3 via activation of the AKT1 signaling pathway, inhibiting FOXO3-mediated apoptosis. Also suppresses the expression of viral early lytic genes in both newly infected and reactivated infected host cells allowing regulation of viral life cycle by harnessing the interferon pathway. Mechanistically, promotes host PML bodies formation as well as host antiviral restriction factors IFIT1-3 expression leading to inhibition of viral early lytic proteins. Also regulates host TRAF3 and TRAF6 ubiquitination by interacting with USP7 deubiquitinase thereby influencing TRAF3/6-mediated signal transduction. The protein is Viral IRF2-like protein (vIRF-2) of Human herpesvirus 8 type P (isolate GK18) (HHV-8).